An 85-amino-acid chain; its full sequence is U4-theraphotoxin-Hhn1i (85 aa).

The first 22 residues, 1–22 (MKVTLIAILTCAAVLVLHTTAA), serve as a signal peptide directing secretion. Positions 23 to 48 (EELEAESQLMEVGMPDTELAAVDEER) are excised as a propeptide. 3 disulfide bridges follow: cysteine 52–cysteine 66, cysteine 56–cysteine 77, and cysteine 71–cysteine 82.

This sequence belongs to the neurotoxin 12 (Hwtx-2) family. 02 (Hwtx-2) subfamily. Expressed by the venom gland.

Its subcellular location is the secreted. Its function is as follows. Postsynaptic neurotoxin. The polypeptide is U4-theraphotoxin-Hhn1i (Cyriopagopus hainanus (Chinese bird spider)).